Reading from the N-terminus, the 347-residue chain is MSGLLCYCRQGFEPELAAELSARAAFVGIAGYARTQRNDGYVLFVCDEAAQLAAKLQWRELIFARQKLVVIAELKGIDPKDRITPILAALEGQQRFGDLWVEHPDSDAGKPLASLARSFGNALRPALRKAGLLTDKPQPRQPRLHICFLDGDHALLAVADSADSAPWPLGIPRLKLLPEAPSRSALKLDEALLTLLTPEEREALVKPGMRAADLGAAPGGWTWVLTRQHVHVTSVDNGPLRAHVLETGLVEHLRADGFHWKPAQPVDWMVCDMVEQPRRVAERMATWVREGWCRNTIFNLKLPMKKRWDETRLCLELFEQQAEKSLIVRAKQLYHDREEITVLAMRG.

S-adenosyl-L-methionine contacts are provided by residues Ser184, 217-220 (APGG), Asp236, Asp256, and Asp272. The active-site Proton acceptor is Lys301.

It belongs to the class I-like SAM-binding methyltransferase superfamily. RNA methyltransferase RlmE family. RlmM subfamily. As to quaternary structure, monomer.

The protein localises to the cytoplasm. It catalyses the reaction cytidine(2498) in 23S rRNA + S-adenosyl-L-methionine = 2'-O-methylcytidine(2498) in 23S rRNA + S-adenosyl-L-homocysteine + H(+). Its function is as follows. Catalyzes the 2'-O-methylation at nucleotide C2498 in 23S rRNA. The chain is Ribosomal RNA large subunit methyltransferase M from Xanthomonas oryzae pv. oryzae (strain PXO99A).